Reading from the N-terminus, the 148-residue chain is Protein NrdI (148 aa).

This sequence belongs to the NrdI family.

Functionally, probably involved in ribonucleotide reductase function. The sequence is that of Protein NrdI from Corynebacterium glutamicum (strain R).